We begin with the raw amino-acid sequence, 211 residues long: MYQPDFPPVPFRLGLYPVVDSVVWIERLLQAGVKTLQLRIKDKCDEDVEPDVANAIKLGRRYGARLFINDYWQLAIQHQAYGVHLGQEDLETTDLSAIRNAGLRLGVSTHDDMEIDVALAARPSYIALGHVFPTQTKQMPSAPQGLEQLTRHIERLADYPTVAIGGISLERVPAVLKTGVGSVAVVSAITQAADWQVATAQLLQLAGAGDE.

Residues 37–41 (QLRIK) and Asn69 each bind 4-amino-2-methyl-5-(diphosphooxymethyl)pyrimidine. Mg(2+)-binding residues include Asp70 and Asp89. Residue Ser108 coordinates 4-amino-2-methyl-5-(diphosphooxymethyl)pyrimidine. A 2-[(2R,5Z)-2-carboxy-4-methylthiazol-5(2H)-ylidene]ethyl phosphate-binding site is contributed by 134–136 (TQT). A 4-amino-2-methyl-5-(diphosphooxymethyl)pyrimidine-binding site is contributed by Lys137. Residues Gly166 and 186–187 (VS) contribute to the 2-[(2R,5Z)-2-carboxy-4-methylthiazol-5(2H)-ylidene]ethyl phosphate site.

This sequence belongs to the thiamine-phosphate synthase family. Mg(2+) serves as cofactor.

The catalysed reaction is 2-[(2R,5Z)-2-carboxy-4-methylthiazol-5(2H)-ylidene]ethyl phosphate + 4-amino-2-methyl-5-(diphosphooxymethyl)pyrimidine + 2 H(+) = thiamine phosphate + CO2 + diphosphate. The enzyme catalyses 2-(2-carboxy-4-methylthiazol-5-yl)ethyl phosphate + 4-amino-2-methyl-5-(diphosphooxymethyl)pyrimidine + 2 H(+) = thiamine phosphate + CO2 + diphosphate. It carries out the reaction 4-methyl-5-(2-phosphooxyethyl)-thiazole + 4-amino-2-methyl-5-(diphosphooxymethyl)pyrimidine + H(+) = thiamine phosphate + diphosphate. It functions in the pathway cofactor biosynthesis; thiamine diphosphate biosynthesis; thiamine phosphate from 4-amino-2-methyl-5-diphosphomethylpyrimidine and 4-methyl-5-(2-phosphoethyl)-thiazole: step 1/1. Its function is as follows. Condenses 4-methyl-5-(beta-hydroxyethyl)thiazole monophosphate (THZ-P) and 2-methyl-4-amino-5-hydroxymethyl pyrimidine pyrophosphate (HMP-PP) to form thiamine monophosphate (TMP). This chain is Thiamine-phosphate synthase, found in Enterobacter sp. (strain 638).